The following is a 288-amino-acid chain: MAFRSRREKLRSILSGPGCIHPGSVYDAISIRIAEDLGFPLGMFGGSVASLAVLGDPDITLITLTELAEQMRRMSRASALPVLVDADHGYGNALNVRRTVQELETAGAAGLTIEDTLLPAAFGEAKTQLISLEEGVGKMKAALSGRSDPTLVIMGRTGAAAITSLDDTIRRAQAYEATGVDALFFTGIKSRAELEAVAAATHLPIVLGGAPEELNAPDYLAGQRVRIALQGHAPIAAATQAVHDTLKALREGAPPKALKGLASAELTSRVMREAETKARGADVLGFKK.

Position 47 (S47) interacts with substrate. D85 is a Mg(2+) binding site. Substrate-binding residues include R156 and H232.

The protein belongs to the isocitrate lyase/PEP mutase superfamily. Oxaloacetate decarboxylase family. In terms of assembly, homotetramer; dimer of dimers. Mg(2+) serves as cofactor.

The catalysed reaction is oxaloacetate + H(+) = pyruvate + CO2. In terms of biological role, catalyzes the decarboxylation of oxaloacetate into pyruvate. Seems to play a role in maintaining cellular concentrations of bicarbonate and pyruvate. The chain is Oxaloacetate decarboxylase from Bradyrhizobium diazoefficiens (strain JCM 10833 / BCRC 13528 / IAM 13628 / NBRC 14792 / USDA 110).